The primary structure comprises 263 residues: Fructose-bisphosphate aldolase class 1 (263 aa).

Residues 24–25 (DH), histidine 29, aspartate 33, and tryptophan 144 contribute to the substrate site. Catalysis depends on tyrosine 146, which acts as the Proton donor. Residues arginine 148, 177-179 (KIK), 202-204 (SGG), and 231-232 (GR) each bind substrate. Catalysis depends on lysine 177, which acts as the Schiff-base intermediate with dihydroxyacetone-P.

This sequence belongs to the DeoC/FbaB aldolase family. In terms of assembly, homodecamer (dimer of pentamers).

It is found in the cytoplasm. It carries out the reaction beta-D-fructose 1,6-bisphosphate = D-glyceraldehyde 3-phosphate + dihydroxyacetone phosphate. Its activity is regulated as follows. Activated by citrate. Its function is as follows. Catalyzes the reversible cleavage of fructose 1,6-bisphosphate (FBP) to glyceraldehyde 3-phosphate (GAP) and dihydroxyacetone phosphate (DHAP). The sequence is that of Fructose-bisphosphate aldolase class 1 (fba) from Thermoproteus tenax (strain ATCC 35583 / DSM 2078 / JCM 9277 / NBRC 100435 / Kra 1).